The primary structure comprises 152 residues: Glutamyl-tRNA(Gln) amidotransferase subunit F, mitochondrial (152 aa).

Belongs to the GatF family. In terms of assembly, subunit of the heterotrimeric GatFAB amidotransferase (AdT) complex, composed of A, B and F subunits.

It localises to the mitochondrion inner membrane. The enzyme catalyses L-glutamyl-tRNA(Gln) + L-glutamine + ATP + H2O = L-glutaminyl-tRNA(Gln) + L-glutamate + ADP + phosphate + H(+). Allows the formation of correctly charged Gln-tRNA(Gln) through the transamidation of misacylated Glu-tRNA(Gln) in the mitochondria. The reaction takes place in the presence of glutamine and ATP through an activated gamma-phospho-Glu-tRNA(Gln). Required for proper protein synthesis within the mitochondrion. The polypeptide is Glutamyl-tRNA(Gln) amidotransferase subunit F, mitochondrial (Komagataella phaffii (strain GS115 / ATCC 20864) (Yeast)).